The chain runs to 425 residues: Serine--tRNA ligase (425 aa).

T230–E232 contacts L-serine. Position 261-263 (R261–E263) interacts with ATP. L-serine is bound at residue E284. An ATP-binding site is contributed by E348 to S351. S384 lines the L-serine pocket.

The protein belongs to the class-II aminoacyl-tRNA synthetase family. Type-1 seryl-tRNA synthetase subfamily. As to quaternary structure, homodimer. The tRNA molecule binds across the dimer.

It localises to the cytoplasm. The enzyme catalyses tRNA(Ser) + L-serine + ATP = L-seryl-tRNA(Ser) + AMP + diphosphate + H(+). It catalyses the reaction tRNA(Sec) + L-serine + ATP = L-seryl-tRNA(Sec) + AMP + diphosphate + H(+). It functions in the pathway aminoacyl-tRNA biosynthesis; selenocysteinyl-tRNA(Sec) biosynthesis; L-seryl-tRNA(Sec) from L-serine and tRNA(Sec): step 1/1. Its function is as follows. Catalyzes the attachment of serine to tRNA(Ser). Is also able to aminoacylate tRNA(Sec) with serine, to form the misacylated tRNA L-seryl-tRNA(Sec), which will be further converted into selenocysteinyl-tRNA(Sec). The chain is Serine--tRNA ligase from Streptococcus sanguinis (strain SK36).